The following is an 81-amino-acid chain: Photosystem I iron-sulfur center (81 aa).

2 4Fe-4S ferredoxin-type domains span residues 2–31 (AHSVKIYDTCIGCTQCVRACPTDVLEMVPW) and 39–68 (IASAPRTEDCVGCKRCESACPTDFLSVRVY). [4Fe-4S] cluster is bound by residues Cys11, Cys14, Cys17, Cys21, Cys48, Cys51, Cys54, and Cys58.

The eukaryotic PSI reaction center is composed of at least 11 subunits. Requires [4Fe-4S] cluster as cofactor.

It localises to the plastid. It is found in the chloroplast thylakoid membrane. It carries out the reaction reduced [plastocyanin] + hnu + oxidized [2Fe-2S]-[ferredoxin] = oxidized [plastocyanin] + reduced [2Fe-2S]-[ferredoxin]. In terms of biological role, apoprotein for the two 4Fe-4S centers FA and FB of photosystem I (PSI); essential for photochemical activity. FB is the terminal electron acceptor of PSI, donating electrons to ferredoxin. The C-terminus interacts with PsaA/B/D and helps assemble the protein into the PSI complex. Required for binding of PsaD and PsaE to PSI. PSI is a plastocyanin-ferredoxin oxidoreductase, converting photonic excitation into a charge separation, which transfers an electron from the donor P700 chlorophyll pair to the spectroscopically characterized acceptors A0, A1, FX, FA and FB in turn. This chain is Photosystem I iron-sulfur center, found in Chlorokybus atmophyticus (Soil alga).